Reading from the N-terminus, the 381-residue chain is Actin-binding Rho-activating protein (381 aa).

Disordered stretches follow at residues E39–S156 and Q179–D207. Residues P69–P79 show a composition bias toward polar residues. A compositionally biased stretch (basic and acidic residues) spans K97–S110. Phosphoserine is present on residues S156 and S188. Positions Q179–S188 are enriched in basic and acidic residues. Actin-binding regions lie at residues E199 to A299 and K300 to K381. Interaction with actin stretches follow at residues S240–G285 and M352–K381.

As to quaternary structure, binds F-actin and ABLIM1, ABLIM2 and ABLIM3. Interaction with ABLIM2 and ABLIM3 enhances activity.

The protein resides in the cytoplasm. It is found in the myofibril. Its subcellular location is the sarcomere. It localises to the cytoskeleton. Acts as an activator of serum response factor (SRF)-dependent transcription possibly by inducing nuclear translocation of MKL1 or MKL2 and through a mechanism requiring Rho-actin signaling. In Homo sapiens (Human), this protein is Actin-binding Rho-activating protein.